A 341-amino-acid polypeptide reads, in one-letter code: Glyceraldehyde-3-phosphate dehydrogenase (341 aa).

NAD(+) contacts are provided by residues 11–12 and Gly110; that span reads TI. Position 139–141 (139–141) interacts with D-glyceraldehyde 3-phosphate; it reads SCN. Residue Cys140 is the Nucleophile of the active site. Arg168 serves as a coordination point for NAD(+). 194 to 195 is a D-glyceraldehyde 3-phosphate binding site; sequence HG. Residue Gln302 participates in NAD(+) binding.

Belongs to the glyceraldehyde-3-phosphate dehydrogenase family. Homotetramer.

It localises to the cytoplasm. It carries out the reaction D-glyceraldehyde 3-phosphate + phosphate + NADP(+) = (2R)-3-phospho-glyceroyl phosphate + NADPH + H(+). The catalysed reaction is D-glyceraldehyde 3-phosphate + phosphate + NAD(+) = (2R)-3-phospho-glyceroyl phosphate + NADH + H(+). It functions in the pathway carbohydrate degradation; glycolysis; pyruvate from D-glyceraldehyde 3-phosphate: step 1/5. The polypeptide is Glyceraldehyde-3-phosphate dehydrogenase (Methanoculleus marisnigri (strain ATCC 35101 / DSM 1498 / JR1)).